Reading from the N-terminus, the 59-residue chain is Protein translocase subunit SecE (59 aa).

Residues 37-57 (GIGIIIIGVIGFIISIIAQLL) traverse the membrane as a helical segment.

The protein belongs to the SecE/SEC61-gamma family. Component of the Sec protein translocase complex. Heterotrimer consisting of SecY (alpha), SecG (beta) and SecE (gamma) subunits. The heterotrimers can form oligomers, although 1 heterotrimer is thought to be able to translocate proteins. Interacts with the ribosome. May interact with SecDF, and other proteins may be involved.

It is found in the cell membrane. Essential subunit of the Sec protein translocation channel SecYEG. Clamps together the 2 halves of SecY. May contact the channel plug during translocation. This Methanothermobacter thermautotrophicus (strain ATCC 29096 / DSM 1053 / JCM 10044 / NBRC 100330 / Delta H) (Methanobacterium thermoautotrophicum) protein is Protein translocase subunit SecE.